We begin with the raw amino-acid sequence, 529 residues long: Peptide chain release factor 3 (529 aa).

Positions 7–275 constitute a tr-type G domain; sequence EQRRTFGIIS…AVVELAPSPR (269 aa). GTP-binding positions include 16-23, 84-88, and 138-141; these read SHPDAGKT, DTPGH, and NKLD.

Belongs to the TRAFAC class translation factor GTPase superfamily. Classic translation factor GTPase family. PrfC subfamily.

It is found in the cytoplasm. In terms of biological role, increases the formation of ribosomal termination complexes and stimulates activities of RF-1 and RF-2. It binds guanine nucleotides and has strong preference for UGA stop codons. It may interact directly with the ribosome. The stimulation of RF-1 and RF-2 is significantly reduced by GTP and GDP, but not by GMP. In Syntrophus aciditrophicus (strain SB), this protein is Peptide chain release factor 3.